A 164-amino-acid chain; its full sequence is Endoribonuclease YbeY (164 aa).

3 residues coordinate Zn(2+): His-111, His-115, and His-121. Residues 140–164 are disordered; the sequence is ELGHPDPYADDDAQKHSTVTIKDSE. Positions 155–164 are enriched in polar residues; that stretch reads HSTVTIKDSE.

Belongs to the endoribonuclease YbeY family. The cofactor is Zn(2+).

The protein resides in the cytoplasm. Single strand-specific metallo-endoribonuclease involved in late-stage 70S ribosome quality control and in maturation of the 3' terminus of the 16S rRNA. The chain is Endoribonuclease YbeY from Pseudomonas fluorescens (strain SBW25).